The primary structure comprises 326 residues: MAPPSAVEANSPIDGVHLKSAFEVKAVHAQTASQGKTLAELAEKWDQGFTFAPIRESQVSRAMTRRYFKDLDTYAESDVVIVGAGSCGLSTAYMLGKARPDLKIAIIEASVSPGGGAWLGGQLFSAMVMRKPADAFLIDLGVPFEDEGDFVVVKHAALFTSTLLSKVLAFPNIKLFNATSVEDLITRQTADGNIRIAGVVTNWTLVTMHHDDQSCMDPNTINAPIVISTTGHDGPFGAFCVKRLVSMNQIKELGGMRGLDMNVAEDAIVKKTREIVPGLIVGGMELSEVDGANRMGPTFGAMALSGVKAAEEALKVFDERKAQNAY.

Substrate is bound by residues Cys-87, 108–109 (EA), Gly-116, and Val-181. The residue at position 215 (Cys-215) is a 2,3-didehydroalanine (Cys). Residues Asp-217, His-232, Met-284, and 294–296 (RMG) contribute to the substrate site.

The protein belongs to the THI4 family. Homooctamer. Requires Fe cation as cofactor. In terms of processing, during the catalytic reaction, a sulfide is transferred from Cys-215 to a reaction intermediate, generating a dehydroalanine residue.

It is found in the cytoplasm. It localises to the nucleus. The enzyme catalyses [ADP-thiazole synthase]-L-cysteine + glycine + NAD(+) = [ADP-thiazole synthase]-dehydroalanine + ADP-5-ethyl-4-methylthiazole-2-carboxylate + nicotinamide + 3 H2O + 2 H(+). Functionally, involved in biosynthesis of the thiamine precursor thiazole. Catalyzes the conversion of NAD and glycine to adenosine diphosphate 5-(2-hydroxyethyl)-4-methylthiazole-2-carboxylic acid (ADT), an adenylated thiazole intermediate. The reaction includes an iron-dependent sulfide transfer from a conserved cysteine residue of the protein to a thiazole intermediate. The enzyme can only undergo a single turnover, which suggests it is a suicide enzyme. May have additional roles in adaptation to various stress conditions and in DNA damage tolerance. The polypeptide is Thiamine thiazole synthase (Sclerotinia sclerotiorum (strain ATCC 18683 / 1980 / Ss-1) (White mold)).